The following is a 198-amino-acid chain: Putative 3-methyladenine DNA glycosylase (198 aa).

This sequence belongs to the DNA glycosylase MPG family.

The protein is Putative 3-methyladenine DNA glycosylase of Natranaerobius thermophilus (strain ATCC BAA-1301 / DSM 18059 / JW/NM-WN-LF).